Consider the following 156-residue polypeptide: Small ribosomal subunit protein uS7 (156 aa).

This sequence belongs to the universal ribosomal protein uS7 family. In terms of assembly, part of the 30S ribosomal subunit. Contacts proteins S9 and S11.

Its function is as follows. One of the primary rRNA binding proteins, it binds directly to 16S rRNA where it nucleates assembly of the head domain of the 30S subunit. Is located at the subunit interface close to the decoding center, probably blocks exit of the E-site tRNA. The chain is Small ribosomal subunit protein uS7 from Shewanella piezotolerans (strain WP3 / JCM 13877).